Consider the following 116-residue polypeptide: Large ribosomal subunit protein bL17 (116 aa).

Belongs to the bacterial ribosomal protein bL17 family. Part of the 50S ribosomal subunit. Contacts protein L32.

This Acaryochloris marina (strain MBIC 11017) protein is Large ribosomal subunit protein bL17.